We begin with the raw amino-acid sequence, 479 residues long: Adenosylhomocysteinase (479 aa).

T56, D134, and E200 together coordinate substrate. 201–203 (TTT) serves as a coordination point for NAD(+). Substrate is bound by residues K230 and D234. NAD(+) is bound by residues N235, 264-269 (GYGDVG), E287, N322, 343-345 (IGH), and N391.

Belongs to the adenosylhomocysteinase family. Homotetramer. Requires NAD(+) as cofactor.

The catalysed reaction is S-adenosyl-L-homocysteine + H2O = L-homocysteine + adenosine. Its pathway is amino-acid biosynthesis; L-homocysteine biosynthesis; L-homocysteine from S-adenosyl-L-homocysteine: step 1/1. In terms of biological role, adenosylhomocysteine is a competitive inhibitor of S-adenosyl-L-methionine-dependent methyl transferase reactions; therefore adenosylhomocysteinase may play a key role in the control of methylations via regulation of the intracellular concentration of adenosylhomocysteine. This is Adenosylhomocysteinase from Plasmodium falciparum (isolate 3D7).